The primary structure comprises 265 residues: Methyl-coenzyme M reductase II subunit gamma (265 aa).

Arg-123 lines the coenzyme M pocket.

Belongs to the methyl-coenzyme M reductase gamma subunit family. MCR is a hexamer of two alpha, two beta, and two gamma chains, forming a dimer of heterotrimers. Requires coenzyme F430 as cofactor.

The catalysed reaction is coenzyme B + methyl-coenzyme M = methane + coenzyme M-coenzyme B heterodisulfide. The protein operates within one-carbon metabolism; methyl-coenzyme M reduction; methane from methyl-coenzyme M: step 1/1. Its function is as follows. Component of the methyl-coenzyme M reductase (MCR) I that catalyzes the reductive cleavage of methyl-coenzyme M (CoM-S-CH3 or 2-(methylthio)ethanesulfonate) using coenzyme B (CoB or 7-mercaptoheptanoylthreonine phosphate) as reductant which results in the production of methane and the mixed heterodisulfide of CoB and CoM (CoM-S-S-CoB). This is the final step in methanogenesis. The polypeptide is Methyl-coenzyme M reductase II subunit gamma (mrtG) (Methanothermobacter thermautotrophicus (strain ATCC 29096 / DSM 1053 / JCM 10044 / NBRC 100330 / Delta H) (Methanobacterium thermoautotrophicum)).